The primary structure comprises 547 residues: Chaperonin GroEL (547 aa).

ATP-binding positions include 30–33, K51, 87–91, G415, and D496; these read TLGP and DGTTT. A disordered region spans residues 525–547; it reads KPEPKSPAGGPGMGGMGGMDGMM. The span at 533 to 547 shows a compositional bias: gly residues; that stretch reads GGPGMGGMGGMDGMM.

Belongs to the chaperonin (HSP60) family. In terms of assembly, forms a cylinder of 14 subunits composed of two heptameric rings stacked back-to-back. Interacts with the co-chaperonin GroES.

The protein localises to the cytoplasm. The enzyme catalyses ATP + H2O + a folded polypeptide = ADP + phosphate + an unfolded polypeptide.. Its function is as follows. Together with its co-chaperonin GroES, plays an essential role in assisting protein folding. The GroEL-GroES system forms a nano-cage that allows encapsulation of the non-native substrate proteins and provides a physical environment optimized to promote and accelerate protein folding. The protein is Chaperonin GroEL of Cereibacter sphaeroides (strain ATCC 17029 / ATH 2.4.9) (Rhodobacter sphaeroides).